The sequence spans 199 residues: Nucleoside triphosphate pyrophosphatase (199 aa).

Asp-72 acts as the Proton acceptor in catalysis.

This sequence belongs to the Maf family. It depends on a divalent metal cation as a cofactor.

The protein localises to the cytoplasm. The enzyme catalyses a ribonucleoside 5'-triphosphate + H2O = a ribonucleoside 5'-phosphate + diphosphate + H(+). It carries out the reaction a 2'-deoxyribonucleoside 5'-triphosphate + H2O = a 2'-deoxyribonucleoside 5'-phosphate + diphosphate + H(+). Nucleoside triphosphate pyrophosphatase. May have a dual role in cell division arrest and in preventing the incorporation of modified nucleotides into cellular nucleic acids. This is Nucleoside triphosphate pyrophosphatase from Synechococcus elongatus (strain ATCC 33912 / PCC 7942 / FACHB-805) (Anacystis nidulans R2).